The following is a 346-amino-acid chain: Low specificity L-threonine aldolase (346 aa).

Lys-207 is modified (N6-(pyridoxal phosphate)lysine).

Belongs to the threonine aldolase family. As to quaternary structure, homotetramer. Pyridoxal 5'-phosphate serves as cofactor.

It catalyses the reaction L-threonine = acetaldehyde + glycine. The catalysed reaction is L-allo-threonine = acetaldehyde + glycine. In terms of biological role, catalyzes the cleavage of L-allo-threonine and L-threonine to glycine and acetaldehyde. Can also act on L-erythro-phenylserine, L-threo-phenylserine, L-beta-3,4-methylenedioxyphenylserine and L-beta-3,4-dihydroxyphenylserine. The sequence is that of Low specificity L-threonine aldolase (ltaE) from Pseudomonas sp. (strain NCIMB 10558).